Reading from the N-terminus, the 312-residue chain is Acetyl-coenzyme A carboxylase carboxyl transferase subunit alpha (312 aa).

One can recognise a CoA carboxyltransferase C-terminal domain in the interval 36–286 (RLDKEVKSIY…KEYFLDALRT (251 aa)).

The protein belongs to the AccA family. Acetyl-CoA carboxylase is a heterohexamer composed of biotin carboxyl carrier protein (AccB), biotin carboxylase (AccC) and two subunits each of ACCase subunit alpha (AccA) and ACCase subunit beta (AccD).

It localises to the cytoplasm. It carries out the reaction N(6)-carboxybiotinyl-L-lysyl-[protein] + acetyl-CoA = N(6)-biotinyl-L-lysyl-[protein] + malonyl-CoA. The protein operates within lipid metabolism; malonyl-CoA biosynthesis; malonyl-CoA from acetyl-CoA: step 1/1. Its function is as follows. Component of the acetyl coenzyme A carboxylase (ACC) complex. First, biotin carboxylase catalyzes the carboxylation of biotin on its carrier protein (BCCP) and then the CO(2) group is transferred by the carboxyltransferase to acetyl-CoA to form malonyl-CoA. This chain is Acetyl-coenzyme A carboxylase carboxyl transferase subunit alpha, found in Helicobacter pylori (strain ATCC 700392 / 26695) (Campylobacter pylori).